The chain runs to 79 residues: RNA-binding protein Hfq (79 aa).

Residues 10–70 (DVFLNTVRKQ…ISTIMPGQPV (61 aa)) form the Sm domain.

The protein belongs to the Hfq family. As to quaternary structure, homohexamer.

Its function is as follows. RNA chaperone that binds small regulatory RNA (sRNAs) and mRNAs to facilitate mRNA translational regulation in response to envelope stress, environmental stress and changes in metabolite concentrations. Also binds with high specificity to tRNAs. The protein is RNA-binding protein Hfq of Bartonella quintana (strain Toulouse) (Rochalimaea quintana).